A 208-amino-acid chain; its full sequence is Imidazoleglycerol-phosphate dehydratase (208 aa).

The protein belongs to the imidazoleglycerol-phosphate dehydratase family.

It is found in the cytoplasm. It catalyses the reaction D-erythro-1-(imidazol-4-yl)glycerol 3-phosphate = 3-(imidazol-4-yl)-2-oxopropyl phosphate + H2O. Its pathway is amino-acid biosynthesis; L-histidine biosynthesis; L-histidine from 5-phospho-alpha-D-ribose 1-diphosphate: step 6/9. This is Imidazoleglycerol-phosphate dehydratase from Arthrobacter sp. (strain FB24).